A 67-amino-acid chain; its full sequence is UPF0519 protein C (67 aa).

The segment at 18 to 37 (KSQANLNSNSTNSPNNVQGL) is disordered. Low complexity predominate over residues 22–33 (NLNSNSTNSPNN).

It belongs to the UPF0519 family.

In Dictyostelium discoideum (Social amoeba), this protein is UPF0519 protein C.